The following is a 288-amino-acid chain: Polyamine aminopropyltransferase (288 aa).

Residues 9 to 238 (ETLHDQFGQY…GIMTFAWATD (230 aa)) form the PABS domain. Glutamine 33 is a binding site for S-methyl-5'-thioadenosine. Residues histidine 64 and aspartate 88 each contribute to the spermidine site. S-methyl-5'-thioadenosine is bound by residues glutamate 108 and 140–141 (DG). Aspartate 158 serves as the catalytic Proton acceptor. 158–161 (DCTD) contributes to the spermidine binding site. An S-methyl-5'-thioadenosine-binding site is contributed by proline 165.

This sequence belongs to the spermidine/spermine synthase family. In terms of assembly, homodimer or homotetramer.

It localises to the cytoplasm. The enzyme catalyses S-adenosyl 3-(methylsulfanyl)propylamine + putrescine = S-methyl-5'-thioadenosine + spermidine + H(+). Its pathway is amine and polyamine biosynthesis; spermidine biosynthesis; spermidine from putrescine: step 1/1. Functionally, catalyzes the irreversible transfer of a propylamine group from the amino donor S-adenosylmethioninamine (decarboxy-AdoMet) to putrescine (1,4-diaminobutane) to yield spermidine. The polypeptide is Polyamine aminopropyltransferase (Escherichia coli O81 (strain ED1a)).